The following is a 534-amino-acid chain: Serine/threonine-protein kinase NLK (534 aa).

2 sufficient for interaction with DAPK3 regions span residues 8–132 (LVSC…KAHH) and 131–423 (HHHQ…SKRI). Required for interaction with TAB2 regions lie at residues 8–311 (LVSC…VVTQ) and 441–534 (YHTC…LVWE). Disordered regions lie at residues 29–79 (AAAA…SSAA) and 97–147 (QQPY…DIEP). A compositionally biased stretch (basic residues) spans 33-61 (GHHHHHHHHLPHLPPPHLHHHHHPQHHLH). Residues 110–126 (PGPAAAAPAQVQAAAAA) show a composition bias toward low complexity. The segment covering 129–138 (KAHHHQHSHH) has biased composition (basic residues). One can recognise a Protein kinase domain in the interval 145-434 (IEPDRPIGYG…AKDALAHPYL (290 aa)). ATP contacts are provided by residues 151–159 (IGYGAFGVV) and Lys174. Asp271 functions as the Proton acceptor in the catalytic mechanism. The residue at position 305 (Thr305) is a Phosphothreonine; by autocatalysis. The TQE motif lies at 305 to 307 (TQE). The interval 435-534 (DEGRLRYHTC…EMPPSPLVWE (100 aa)) is required for homodimerization and kinase activation and localization to the nucleus. Position 529 is a phosphoserine (Ser529).

This sequence belongs to the protein kinase superfamily. CMGC Ser/Thr protein kinase family. MAP kinase subfamily. In terms of assembly, homodimer. Homodimerization is required for intermolecular autophosphorylation, kinase activation and nuclear localization. May interact with components of cullin-RING-based SCF (SKP1-CUL1-F-box protein) E3 ubiquitin-protein ligase complexes. Interacts with LEF1, MEF2A, MYBL1 and MYBL2. Interacts with the upstream activating kinases HIPK2 and MAP3K7/TAK1. Interaction with MAP3K7/TAK1 seems to be indirect, and may be mediated by other proteins such as STAT3, TAB1 and TAB2. Interacts with and phosphorylates a number of transcription factors including FOXO1, FOXO3, FOXO4, MYB, NOTCH1 and TCF7L2/TCF4. Interacts with DAPK3/ZIPK, and this interaction may disrupt interaction with transcription factors such as TCF7L2/TCF4. Forms a transcriptional repressor complex with CHD7, PPARG and SETDB1. Interacts with RNF138/NARF. Interacts with ATF5; the interaction stabilizes ATF5 at the protein level in a kinase-independent manner. It depends on Mg(2+) as a cofactor. In terms of processing, phosphorylated on Thr-305. Intermolecular autophosphorylation on Thr-305 activates the enzyme.

It is found in the nucleus. It localises to the cytoplasm. It carries out the reaction L-seryl-[protein] + ATP = O-phospho-L-seryl-[protein] + ADP + H(+). It catalyses the reaction L-threonyl-[protein] + ATP = O-phospho-L-threonyl-[protein] + ADP + H(+). Activated by the non-canonical Wnt signaling pathway, in which WNT5A leads to activation of MAP3K7/TAK1 and HIPK2, which subsequently phosphorylates and activates this protein. Activated by dimerization and subsequent intermolecular autophosphorylation on Thr-305. Other cytokines such as IL6 may also activate this regulatory circuit. Functionally, serine/threonine-protein kinase that regulates a number of transcription factors with key roles in cell fate determination. Positive effector of the non-canonical Wnt signaling pathway, acting downstream of WNT5A, MAP3K7/TAK1 and HIPK2. Negative regulator of the canonical Wnt/beta-catenin signaling pathway. Binds to and phosphorylates TCF7L2/TCF4 and LEF1, promoting the dissociation of the TCF7L2/LEF1/beta-catenin complex from DNA, as well as the ubiquitination and subsequent proteolysis of LEF1. Together these effects inhibit the transcriptional activation of canonical Wnt/beta-catenin target genes. Negative regulator of the Notch signaling pathway. Binds to and phosphorylates NOTCH1, thereby preventing the formation of a transcriptionally active ternary complex of NOTCH1, RBPJ/RBPSUH and MAML1. Negative regulator of the MYB family of transcription factors. Phosphorylation of MYB leads to its subsequent proteolysis while phosphorylation of MYBL1 and MYBL2 inhibits their interaction with the coactivator CREBBP. Other transcription factors may also be inhibited by direct phosphorylation of CREBBP itself. Acts downstream of IL6 and MAP3K7/TAK1 to phosphorylate STAT3, which is in turn required for activation of NLK by MAP3K7/TAK1. Upon IL1B stimulus, cooperates with ATF5 to activate the transactivation activity of C/EBP subfamily members. Phosphorylates ATF5 but also stabilizes ATF5 protein levels in a kinase-independent manner. Acts as an inhibitor of the mTORC1 complex in response to osmotic stress by mediating phosphorylation of RPTOR, thereby preventing recruitment of the mTORC1 complex to lysosomes. This is Serine/threonine-protein kinase NLK (NLK) from Bos taurus (Bovine).